We begin with the raw amino-acid sequence, 102 residues long: NADH-quinone oxidoreductase subunit K (102 aa).

Transmembrane regions (helical) follow at residues 6 to 26, 30 to 50, and 62 to 82; these read FEHALVLASVLFVLGLVALLI, LIVMLMSVEIMLNAAGLAFIA, and VMFLLILTLAAAEVGVGLGLG.

The protein belongs to the complex I subunit 4L family. As to quaternary structure, NDH-1 is composed of 14 different subunits. Subunits NuoA, H, J, K, L, M, N constitute the membrane sector of the complex.

The protein resides in the cell inner membrane. It carries out the reaction a quinone + NADH + 5 H(+)(in) = a quinol + NAD(+) + 4 H(+)(out). Functionally, NDH-1 shuttles electrons from NADH, via FMN and iron-sulfur (Fe-S) centers, to quinones in the respiratory chain. The immediate electron acceptor for the enzyme in this species is believed to be ubiquinone. Couples the redox reaction to proton translocation (for every two electrons transferred, four hydrogen ions are translocated across the cytoplasmic membrane), and thus conserves the redox energy in a proton gradient. The protein is NADH-quinone oxidoreductase subunit K of Methylococcus capsulatus (strain ATCC 33009 / NCIMB 11132 / Bath).